The following is a 492-amino-acid chain: RNase aCSPSF2 (492 aa).

A divalent metal cation-binding residues include His-130, His-132, Asp-134, His-135, His-213, Asp-234, and His-460.

The protein belongs to the metallo-beta-lactamase superfamily. RNA-metabolizing metallo-beta-lactamase-like family. The cofactor is Mg(2+).

Functionally, a 5'-3' exoribonuclease, more active on 5'-monophosphorylated and 5'-hydroxylated RNA than 5'-tri-phosphorylated RNA; note there is no evidence for accumulation of 5'-monophosphorylated RNA in this organism. Translation initiation factor 2 subunit gamma but not subunit alpha protects 5'-tri-phosphorylated RNA from degradation by this enzyme. The chain is RNase aCSPSF2 from Saccharolobus solfataricus (strain ATCC 35092 / DSM 1617 / JCM 11322 / P2) (Sulfolobus solfataricus).